The primary structure comprises 278 residues: ADP-dependent (S)-NAD(P)H-hydrate dehydratase (278 aa).

In terms of domain architecture, YjeF C-terminal spans 5-272; that stretch reads TTEIVSRTII…TRIPTYMHRF (268 aa). (6S)-NADPHX is bound by residues Ala-40, Gly-103, and His-152. Gly-214 contributes to the AMP binding site. Asp-215 provides a ligand contact to (6S)-NADPHX.

This sequence belongs to the NnrD/CARKD family. In terms of assembly, homotetramer. Requires Mg(2+) as cofactor.

It carries out the reaction (6S)-NADHX + ADP = AMP + phosphate + NADH + H(+). The catalysed reaction is (6S)-NADPHX + ADP = AMP + phosphate + NADPH + H(+). Its function is as follows. Catalyzes the dehydration of the S-form of NAD(P)HX at the expense of ADP, which is converted to AMP. Together with NAD(P)HX epimerase, which catalyzes the epimerization of the S- and R-forms, the enzyme allows the repair of both epimers of NAD(P)HX, a damaged form of NAD(P)H that is a result of enzymatic or heat-dependent hydration. This Lactiplantibacillus plantarum (strain ATCC BAA-793 / NCIMB 8826 / WCFS1) (Lactobacillus plantarum) protein is ADP-dependent (S)-NAD(P)H-hydrate dehydratase.